We begin with the raw amino-acid sequence, 823 residues long: Semaphorin-4B (823 aa).

The first 30 residues, 1 to 30 (MGRASRSAVLRRALLLLLLLLLLRTTTTRA), serve as a signal peptide directing secretion. Over 31–703 (LGPRISVPLG…WGADKSYWNE (673 aa)) the chain is Extracellular. Residues 34–510 (RISVPLGSEE…SHSGVVQVPV (477 aa)) form the Sema domain. 3 N-linked (GlcNAc...) asparagine glycosylation sites follow: N53, N56, and N83. C107 and C118 are oxidised to a cystine. A glycan (N-linked (GlcNAc...) asparagine) is linked at N129. Disulfide bonds link C136/C145, C273/C386, and C297/C346. Residues N397 and N512 are each glycosylated (N-linked (GlcNAc...) asparagine). The 71-residue stretch at 512-582 (NCSLYPTCGD…RFLVPGKPCK (71 aa)) folds into the PSI domain. Cysteines 513 and 530 form a disulfide. N567, N615, and N680 each carry an N-linked (GlcNAc...) asparagine glycan. The Ig-like C2-type domain occupies 589 to 649 (NTVNTLACPL…FQCWSIEEGF (61 aa)). The cysteines at positions 596 and 642 are disulfide-linked. A helical transmembrane segment spans residues 704 to 724 (FLVMCTLFVFAMVLLFLFFLY). At 725–823 (RHRDGMKLFL…LGSEIRDSVV (99 aa)) the chain is on the cytoplasmic side. Phosphoserine is present on residues S779, S780, S804, and S816.

Belongs to the semaphorin family. As to quaternary structure, interacts with GIPC PDZ domain.

The protein localises to the membrane. Inhibits axonal extension by providing local signals to specify territories inaccessible for growing axons. The chain is Semaphorin-4B from Mus musculus (Mouse).